The chain runs to 227 residues: Urease accessory protein UreF (227 aa).

The protein belongs to the UreF family. As to quaternary structure, ureD, UreF and UreG form a complex that acts as a GTP-hydrolysis-dependent molecular chaperone, activating the urease apoprotein by helping to assemble the nickel containing metallocenter of UreC. The UreE protein probably delivers the nickel.

The protein localises to the cytoplasm. Required for maturation of urease via the functional incorporation of the urease nickel metallocenter. This chain is Urease accessory protein UreF, found in Actinobacillus pleuropneumoniae serotype 3 (strain JL03).